The following is an 898-amino-acid chain: Probable LRR receptor-like serine/threonine-protein kinase At4g20450 (898 aa).

The N-terminal stretch at 1–24 (MEGIHKLIFLALIWIFLITNIVDA) is a signal peptide. At 25-535 (QDQQGFISLD…TGPGNNKKKL (511 aa)) the chain is on the extracellular side. 10 N-linked (GlcNAc...) asparagine glycosylation sites follow: N40, N52, N98, N247, N253, N420, N443, N465, N484, and N489. LRR repeat units lie at residues 455-477 (QLQKLDLSNNNLTGKVPEFLAKM), 479-501 (LLTFINLSGNNLSGSIPQSLLNM), and 505-526 (GLITLLYNGNNLCLDPSCESET). The helical transmembrane segment at 536–556 (LVPILASAASVGIIIAVLLLV) threads the bilayer. Residues 557–898 (NILLLRKKKP…FGPEHIPDAR (342 aa)) lie on the Cytoplasmic side of the membrane. Phosphothreonine is present on T582. Residues 591–864 (NNFERPLGEG…QVANELQECL (274 aa)) form the Protein kinase domain. ATP-binding positions include 597 to 605 (LGEGGFGVV) and K619. Y664 is subject to Phosphotyrosine. The Proton acceptor role is filled by D716. A Phosphoserine modification is found at S750. T751 is subject to Phosphothreonine. At Y764 the chain carries Phosphotyrosine. The segment at 864–898 (LLTENSRKGGRHDVDSKSSLEQSTSFGPEHIPDAR) is disordered. Residues 868-881 (NSRKGGRHDVDSKS) are compositionally biased toward basic and acidic residues.

This sequence belongs to the protein kinase superfamily. Ser/Thr protein kinase family.

It localises to the membrane. It carries out the reaction L-seryl-[protein] + ATP = O-phospho-L-seryl-[protein] + ADP + H(+). The catalysed reaction is L-threonyl-[protein] + ATP = O-phospho-L-threonyl-[protein] + ADP + H(+). The polypeptide is Probable LRR receptor-like serine/threonine-protein kinase At4g20450 (Arabidopsis thaliana (Mouse-ear cress)).